We begin with the raw amino-acid sequence, 505 residues long: Nicotinamide phosphoribosyltransferase (505 aa).

R196 serves as a coordination point for diphosphate. D219 is a binding site for beta-nicotinamide D-ribonucleotide. H246 and R314 together coordinate diphosphate. Beta-nicotinamide D-ribonucleotide contacts are provided by residues 314–316, 369–370, and R408; these read RPD and GD.

The protein belongs to the NAPRTase family.

It carries out the reaction beta-nicotinamide D-ribonucleotide + diphosphate = 5-phospho-alpha-D-ribose 1-diphosphate + nicotinamide + H(+). Its pathway is cofactor biosynthesis; NAD(+) biosynthesis; nicotinamide D-ribonucleotide from 5-phospho-alpha-D-ribose 1-diphosphate and nicotinamide: step 1/1. Its activity is regulated as follows. 10-fold more active in the presence of saturating ATP. In terms of biological role, catalyzes the condensation of nicotinamide with 5-phosphoribosyl-1-pyrophosphate to yield nicotinamide mononucleotide, an intermediate in the biosynthesis of NAD. Functions in the nondeamidating salvage pathway for production of NAD from nicotinamide. Displays a strict preference for nicotinamide over nicotinate substrate. In Acinetobacter baylyi (strain ATCC 33305 / BD413 / ADP1), this protein is Nicotinamide phosphoribosyltransferase.